A 390-amino-acid chain; its full sequence is Exodeoxyribonuclease 7 large subunit (390 aa).

It belongs to the XseA family. As to quaternary structure, heterooligomer composed of large and small subunits.

Its subcellular location is the cytoplasm. It carries out the reaction Exonucleolytic cleavage in either 5'- to 3'- or 3'- to 5'-direction to yield nucleoside 5'-phosphates.. In terms of biological role, bidirectionally degrades single-stranded DNA into large acid-insoluble oligonucleotides, which are then degraded further into small acid-soluble oligonucleotides. The protein is Exodeoxyribonuclease 7 large subunit of Synechococcus sp. (strain CC9311).